Here is a 119-residue protein sequence, read N- to C-terminus: Large ribosomal subunit protein bL20 (119 aa).

Belongs to the bacterial ribosomal protein bL20 family.

Functionally, binds directly to 23S ribosomal RNA and is necessary for the in vitro assembly process of the 50S ribosomal subunit. It is not involved in the protein synthesizing functions of that subunit. In Geobacillus thermodenitrificans (strain NG80-2), this protein is Large ribosomal subunit protein bL20.